Consider the following 157-residue polypeptide: Cytochrome b6-f complex subunit 4 (157 aa).

Helical transmembrane passes span 35–55 (ILYI…GLGV), 94–114 (LVGV…AFIE), and 130–150 (LVYL…VLGI).

It belongs to the cytochrome b family. PetD subfamily. The 4 large subunits of the cytochrome b6-f complex are cytochrome b6, subunit IV (17 kDa polypeptide, petD), cytochrome f and the Rieske protein, while the 4 small subunits are petG, petL, petM and petN. The complex functions as a dimer.

The protein resides in the plastid. The protein localises to the chloroplast thylakoid membrane. Component of the cytochrome b6-f complex, which mediates electron transfer between photosystem II (PSII) and photosystem I (PSI), cyclic electron flow around PSI, and state transitions. The protein is Cytochrome b6-f complex subunit 4 of Amphidinium carterae (Dinoflagellate).